Reading from the N-terminus, the 301-residue chain is 33 kDa chaperonin (301 aa).

Intrachain disulfides connect C239–C241 and C272–C275.

It belongs to the HSP33 family. Under oxidizing conditions two disulfide bonds are formed involving the reactive cysteines. Under reducing conditions zinc is bound to the reactive cysteines and the protein is inactive.

The protein localises to the cytoplasm. Its function is as follows. Redox regulated molecular chaperone. Protects both thermally unfolding and oxidatively damaged proteins from irreversible aggregation. Plays an important role in the bacterial defense system toward oxidative stress. In Nostoc sp. (strain PCC 7120 / SAG 25.82 / UTEX 2576), this protein is 33 kDa chaperonin.